The sequence spans 473 residues: Lactate utilization protein B (473 aa).

2 consecutive 4Fe-4S ferredoxin-type domains span residues 302–332 (GSEF…GHSY) and 351–380 (YDDY…LHDL). The [4Fe-4S] cluster site is built by cysteine 311, cysteine 314, cysteine 317, cysteine 321, cysteine 364, cysteine 367, and cysteine 371.

It belongs to the LutB/YkgF family.

Its function is as follows. Is involved in L-lactate degradation and allows cells to grow with lactate as the sole carbon source. Has probably a role as an electron transporter during oxidation of L-lactate. The sequence is that of Lactate utilization protein B from Bacillus cereus (strain G9842).